Here is a 169-residue protein sequence, read N- to C-terminus: S-ribosylhomocysteine lyase (169 aa).

Residues histidine 54, histidine 58, and cysteine 128 each contribute to the Fe cation site.

The protein belongs to the LuxS family. In terms of assembly, homodimer. The cofactor is Fe cation.

The catalysed reaction is S-(5-deoxy-D-ribos-5-yl)-L-homocysteine = (S)-4,5-dihydroxypentane-2,3-dione + L-homocysteine. In terms of biological role, involved in the synthesis of autoinducer 2 (AI-2) which is secreted by bacteria and is used to communicate both the cell density and the metabolic potential of the environment. The regulation of gene expression in response to changes in cell density is called quorum sensing. Catalyzes the transformation of S-ribosylhomocysteine (RHC) to homocysteine (HC) and 4,5-dihydroxy-2,3-pentadione (DPD). This is S-ribosylhomocysteine lyase from Shewanella loihica (strain ATCC BAA-1088 / PV-4).